The chain runs to 1076 residues: ESX secretion system protein YueB (1076 aa).

The helical transmembrane segment at Ile-9 to Ile-29 threads the bilayer. Disordered regions lie at residues Arg-372–Asp-404 and Ile-423–Ile-552. Residues Ile-423–Thr-439 show a composition bias toward basic and acidic residues. 2 stretches are compositionally biased toward polar residues: residues Asp-449–Thr-495 and Ser-503–Asp-522. Positions Ile-552 to Asn-622 form a coiled coil. Transmembrane regions (helical) follow at residues Thr-904–Phe-924, Ala-938–Ile-958, Asp-964–Ile-984, Gly-995–Met-1015, and Thr-1040–Ile-1060.

It belongs to the EsaA family.

It localises to the cell membrane. Functionally, required for YukE secretion. Probable component or regulator of the ESX/ESAT-6-like secretion system (BsEss). Bacteriophage SPP1 receptor. Essential for the irreversible adsorption of the bacteriophage. This Bacillus subtilis (strain 168) protein is ESX secretion system protein YueB (yueB).